The sequence spans 217 residues: Very-long-chain (3R)-3-hydroxyacyl-CoA dehydratase PHS1 (217 aa).

At 1 to 11 (MSKKLASPLSF) the chain is on the cytoplasmic side. The chain crosses the membrane as a helical span at residues 12–29 (LPLYNLLSAVGWSYLLYL). At 30–47 (VISLYPKVGQPAFFYQTK) the chain is on the lumenal side. A helical membrane pass occupies residues 48 to 66 (NVATLVQCGAIIEIINSFL). The Cytoplasmic segment spans residues 67 to 76 (GVVRSPLLTT). A helical membrane pass occupies residues 77–94 (VAQVSSRLLVVLGIFQLL). The Lumenal portion of the chain corresponds to 95 to 99 (PNTSG). Residues 100-117 (VQSVVYISLLLAWSITEI) traverse the membrane as a helical segment. At 118–142 (VRYLYYFFMLVFKNGAPKILILLRY) the chain is on the cytoplasmic side. The chain crosses the membrane as a helical span at residues 143-160 (NLFWILYPTGVASELRII). Active-site residues include Tyr149 and Glu156. Residues 161–178 (YCALNAAESQYSLLYKRI) lie on the Lumenal side of the membrane. A helical transmembrane segment spans residues 179–196 (LIAAMLAYIPGFPMLFLH). Residues 197 to 217 (MVAQRKKVMKSLRSSFGKKLI) are Cytoplasmic-facing. Residues 214–217 (KKLI) carry the Endoplasmic reticulum retention signal motif.

Belongs to the very long-chain fatty acids dehydratase HACD family.

It is found in the endoplasmic reticulum membrane. The protein resides in the vacuole membrane. It carries out the reaction a very-long-chain (3R)-3-hydroxyacyl-CoA = a very-long-chain (2E)-enoyl-CoA + H2O. The catalysed reaction is (3R)-hydroxyeicosanoyl-CoA = (2E)-eicosenoyl-CoA + H2O. The enzyme catalyses (3R)-hydroxydocosanoyl-CoA = (2E)-docosenoyl-CoA + H2O. It catalyses the reaction (3R)-hydroxyoctadecanoyl-CoA = (2E)-octadecenoyl-CoA + H2O. It carries out the reaction (3R)-hydroxytetracosanoyl-CoA = (2E)-tetracosenoyl-CoA + H2O. The catalysed reaction is (3R)-hydroxyhexacosanoyl-CoA = (2E)-hexacosenoyl-CoA + H2O. The enzyme catalyses (3R)-hydroxyhexadecanoyl-CoA = (2E)-hexadecenoyl-CoA + H2O. The protein operates within lipid metabolism; fatty acid biosynthesis. Catalyzes the third of the four reactions of the long-chain fatty acids elongation cycle. This endoplasmic reticulum-bound enzymatic process, allows the addition of two carbons to the chain of long- and very long-chain fatty acids/VLCFAs per cycle. This enzyme catalyzes the dehydration of the 3-hydroxyacyl-CoA intermediate into trans-2,3-enoyl-CoA, within each cycle of fatty acid elongation. Thereby, it participates in the production of VLCFAs of different chain lengths that are involved in multiple biological processes as precursors of membrane lipids and lipid mediators. The sequence is that of Very-long-chain (3R)-3-hydroxyacyl-CoA dehydratase PHS1 (PHS1) from Saccharomyces cerevisiae (strain ATCC 204508 / S288c) (Baker's yeast).